The following is a 357-amino-acid chain: UDP-N-acetylglucosamine--N-acetylmuramyl-(pentapeptide) pyrophosphoryl-undecaprenol N-acetylglucosamine transferase (357 aa).

Residues Thr-14–Gly-16, Asn-120, Arg-164, Ser-194, and Gln-291 each bind UDP-N-acetyl-alpha-D-glucosamine.

This sequence belongs to the glycosyltransferase 28 family. MurG subfamily.

Its subcellular location is the cell inner membrane. The catalysed reaction is di-trans,octa-cis-undecaprenyl diphospho-N-acetyl-alpha-D-muramoyl-L-alanyl-D-glutamyl-meso-2,6-diaminopimeloyl-D-alanyl-D-alanine + UDP-N-acetyl-alpha-D-glucosamine = di-trans,octa-cis-undecaprenyl diphospho-[N-acetyl-alpha-D-glucosaminyl-(1-&gt;4)]-N-acetyl-alpha-D-muramoyl-L-alanyl-D-glutamyl-meso-2,6-diaminopimeloyl-D-alanyl-D-alanine + UDP + H(+). It participates in cell wall biogenesis; peptidoglycan biosynthesis. Its function is as follows. Cell wall formation. Catalyzes the transfer of a GlcNAc subunit on undecaprenyl-pyrophosphoryl-MurNAc-pentapeptide (lipid intermediate I) to form undecaprenyl-pyrophosphoryl-MurNAc-(pentapeptide)GlcNAc (lipid intermediate II). The polypeptide is UDP-N-acetylglucosamine--N-acetylmuramyl-(pentapeptide) pyrophosphoryl-undecaprenol N-acetylglucosamine transferase (Fusobacterium nucleatum subsp. nucleatum (strain ATCC 25586 / DSM 15643 / BCRC 10681 / CIP 101130 / JCM 8532 / KCTC 2640 / LMG 13131 / VPI 4355)).